A 177-amino-acid polypeptide reads, in one-letter code: Large ribosomal subunit protein uL10 (177 aa).

It belongs to the universal ribosomal protein uL10 family. As to quaternary structure, part of the ribosomal stalk of the 50S ribosomal subunit. The N-terminus interacts with L11 and the large rRNA to form the base of the stalk. The C-terminus forms an elongated spine to which L12 dimers bind in a sequential fashion forming a multimeric L10(L12)X complex.

Its function is as follows. Forms part of the ribosomal stalk, playing a central role in the interaction of the ribosome with GTP-bound translation factors. This Legionella pneumophila (strain Paris) protein is Large ribosomal subunit protein uL10.